The following is a 223-amino-acid chain: Small ribosomal subunit protein uS3 (223 aa).

In terms of domain architecture, KH type-2 spans valine 39 to arginine 107.

This sequence belongs to the universal ribosomal protein uS3 family. Part of the 30S ribosomal subunit. Forms a tight complex with proteins S10 and S14.

Binds the lower part of the 30S subunit head. Binds mRNA in the 70S ribosome, positioning it for translation. This chain is Small ribosomal subunit protein uS3, found in Francisella tularensis subsp. novicida (strain U112).